The following is a 354-amino-acid chain: Rhodopsin (354 aa).

At 1–36 (MNGTEGPNFYIPMSNKTGVVRSPFEYPQYYLAEPWQ) the chain is on the extracellular side. N-linked (GlcNAc...) asparagine glycosylation is found at N2 and N15. Residues 37–61 (YSILCAYMFLLILLGFPINFMTLYV) traverse the membrane as a helical segment. The Cytoplasmic segment spans residues 62–73 (TIQHKKLRTPLN). Residues 74–96 (YILLNLAFANHFMVLCGFTVTMY) form a helical membrane-spanning segment. At 97–110 (SSMNGYFILGATGC) the chain is on the extracellular side. A disulfide bridge connects residues C110 and C187. A helical transmembrane segment spans residues 111 to 133 (YVEGFFATLGGEIALWSLVVLAI). The short motif at 134–136 (ERY) is the 'Ionic lock' involved in activated form stabilization element. Residues 134–152 (ERYVVVCKPMSNFRFSENH) lie on the Cytoplasmic side of the membrane. Residues 153–173 (AVMGVAFTWIMALSCAVPPLL) form a helical membrane-spanning segment. Residues 174-202 (GWSRYIPEGMQCSCGVDYYTLKPEVNNES) lie on the Extracellular side of the membrane. Residues 203–224 (FVIYMFVVHFTIPLIIIFFCYG) form a helical membrane-spanning segment. The Cytoplasmic portion of the chain corresponds to 225 to 252 (RLVCTVKEAAAQQQESATTQKAEKEVTR). The helical transmembrane segment at 253-274 (MVIIMVVFFLICWVPYASVAFF) threads the bilayer. Residues 275–286 (IFSNQGSEFGPI) are Extracellular-facing. A helical membrane pass occupies residues 287–308 (FMTVPAFFAKSSSIYNPVIYIM). K296 carries the post-translational modification N6-(retinylidene)lysine. The Cytoplasmic portion of the chain corresponds to 309–354 (LNKQFRNCMITTLCCGKNPFGEDDASSAATSKTEASSVSSSQVSPA). S-palmitoyl cysteine attachment occurs at residues C322 and C323. The tract at residues 331 to 354 (DDASSAATSKTEASSVSSSQVSPA) is disordered. Residues 334 to 354 (SSAATSKTEASSVSSSQVSPA) show a composition bias toward low complexity.

Belongs to the G-protein coupled receptor 1 family. Opsin subfamily. Post-translationally, contains one covalently linked retinal chromophore. Upon light absorption, the covalently bound 11-cis-retinal is converted to all-trans-retinal. After hydrolysis of the Schiff base and release of the covalently bound all-trans-retinal, active rhodopsin is regenerated by binding of a fresh molecule of 11-cis-retinal.

It is found in the membrane. The protein localises to the cell projection. It localises to the cilium. Its subcellular location is the photoreceptor outer segment. Its function is as follows. Photoreceptor required for image-forming vision at low light intensity. Required for photoreceptor cell viability after birth. Light-induced isomerization of 11-cis to all-trans retinal triggers a conformational change that activates signaling via G-proteins. Subsequent receptor phosphorylation mediates displacement of the bound G-protein alpha subunit by arrestin and terminates signaling. The polypeptide is Rhodopsin (RHO) (Bufo bufo (European toad)).